Reading from the N-terminus, the 527-residue chain is Cytochrome P450 monooxygenase olcJ (527 aa).

A helical transmembrane segment spans residues 21–43 (GLLTRYNVFMAISITVTALYLIH). C464 contributes to the heme binding site.

Belongs to the cytochrome P450 family. The cofactor is heme.

The protein localises to the membrane. It functions in the pathway secondary metabolite biosynthesis; terpenoid biosynthesis. Functionally, cytochrome P450 monooxygenase; part of the gene cluster that mediates the biosynthesis of 15-deoxyoxalicine B. The first step of the pathway is the synthesis of nicotinyl-CoA from nicotinic acid by the nicotinic acid-CoA ligase olcI. Nicotinyl-CoA is then a substrate of polyketide synthase olcA to produce 4-hydroxy-6-(3-pyridinyl)-2H-pyran-2-one (HPPO) which is further prenylated by the polyprenyl transferase olcH to yield geranylgeranyl-HPPO. Geranylgeranyl pyrophosphate is provided by the cluster-specific geranylgeranyl pyrophosphate synthase olcC. The FAD-dependent monooxygenase olcE catalyzes the epoxidation of geranylgeranyl-HPPO and the terpene cyclase olcD catalyzes the cyclization of the terpenoid component, resulting in the formation of the tricyclic terpene moiety seen in predecaturin E. The cytochrome P450 monooxygenase then catalyzes the allylic oxidation of predecaturin E, which is followed by spirocylization with concomitant loss of one molecule of water to form decaturin E. Decaturin E is the substrate of the cytochrome P450 monooxygenase olcJ which hydroxylates it at the C-29 position to form decaturin F. The short-chain dehydrogenase/reductase olcF may catalyze the oxidation of decaturin F to generate the 29-hydroxyl-27-one intermediate, and subsequent hemiacetal formation probably leads to the formation of decaturin C. The dioxygenase olcK may be a peroxisomal enzyme that catalyzes the hydroxylation of decaturin C into decaturin A once decaturin C is shuttled into the peroxisome by the MFS transporter olcL. Finally the cytochrome P450 monooxygenase olcB catalyzes the oxidative rearrangement to yield 15-deoxyoxalicine B. In the absence of olcJ, decaturin E may be shunted to a pathway in which it is oxidized to a ketone, possibly by olcF, to form decaturin D, which undergoes further allylic oxidation to yield decaturin G. Moreover, in the absence of oclK or oclL, oclB can convert decaturin C into 15-deoxyoxalicine A. The chain is Cytochrome P450 monooxygenase olcJ from Penicillium canescens.